The chain runs to 166 residues: Emerin homolog 1 (166 aa).

One can recognise an LEM domain in the interval 1–44; the sequence is MDVSQLTDAELRDSLKSHGVSVGPIVATTRKLYEKKLIKLSDGS. Residues 1–127 are Nuclear-facing; it reads MDVSQLTDAE…QAQSNKGGFL (127 aa). Residues 62-99 are disordered; the sequence is IISSSPKKSPPQRVFQNVSAATAAATTSPESDSDDCEE. The chain crosses the membrane as a helical span at residues 128–148; that stretch reads GSTITFTILFVFIAVFAYFLI. Topologically, residues 149–166 are perinuclear space; it reads ENAEQLKLVAETNPEDTI.

As to quaternary structure, interacts with lmn-1 and baf-1. In terms of tissue distribution, ubiquitous. Expressed in all cells, except in cells undergoing spermatogenesis. High expression in hypodermis, neurons, pharyngeal muscle, body wall muscle and gonadal sheath.

Its subcellular location is the nucleus inner membrane. It localises to the nucleus envelope. Its function is as follows. Nuclear lamina-associated inner nuclear membrane protein that is involved in cell division, nuclear structure organization, maintenance of nuclear envelope integrity and nuclear envelope reformation after mitosis. Involved in chromosome segregation and cell division, probably via its interaction with the nuclear intermediate filament protein lmn-1, the main component of nuclear lamina. Required to organize the distribution of lmn-1, nuclear pore complexes (NPCs) and chromatin in mitotically active cells. Together with lem-2, plays a role in baf-1 enrichment at the nuclear envelope in anaphase. Together with lem-2, involved in muscle cell attachment to hypodermal cells, as well as muscle cell location and sarcomere organization. May play a role in radiation-induced DNA damage repair response. May repress binding of transcription factor pha-4 with target sequences in pharyngeal cells. In Caenorhabditis elegans, this protein is Emerin homolog 1 (emr-1).